The following is a 274-amino-acid chain: MSQSSVDIPPKGGFSFDLCKRNDMLTQKGLKAPSFLKTGTTIVGLIFKDGVILGADTRATEGPIVADKNCEKIHYMAPNIYCCGAGTAADTEAVTDMVSSQLRLHRYQTGRDSRVVTALTLLKKHLFSYQGHVSAALVLGGVDITGPHLHTIYPHGSTDTLPFATMGSGSLAAMSVFEAKYKEGLTRDEGIKLVAEAICSGIFNDLGSGSNVDICVITKGHKEYLRNYMEPNPRTYVSSKGYSFTKKTEVLLTKITPLLERVEIVEVAGEAMEE.

A propeptide spans 1-37 (MSQSSVDIPPKGGFSFDLCKRNDMLTQKGLKAPSFLK) (removed in mature form). Catalysis depends on Thr40, which acts as the Nucleophile.

Belongs to the peptidase T1B family. Component of the 20S core complex of the 26S proteasome. The 26S proteasome is composed of a core protease (CP), known as the 20S proteasome, capped at one or both ends by the 19S regulatory particle (RP/PA700). The 20S proteasome core is composed of 28 subunits that are arranged in four stacked rings, resulting in a barrel-shaped structure. The two end rings are each formed by seven alpha subunits, and the two central rings are each formed by seven beta subunits. The catalytic chamber with the active sites is on the inside of the barrel.

The protein localises to the cytoplasm. The protein resides in the nucleus. The catalysed reaction is Cleavage of peptide bonds with very broad specificity.. Its function is as follows. The proteasome is a multicatalytic proteinase complex which is characterized by its ability to cleave peptides with Arg, Phe, Tyr, Leu, and Glu adjacent to the leaving group at neutral or slightly basic pH. The proteasome has an ATP-dependent proteolytic activity. This chain is Proteasome subunit beta type-7-B (PBB2), found in Arabidopsis thaliana (Mouse-ear cress).